The chain runs to 436 residues: Serine--tRNA ligase (436 aa).

239 to 241 (TAE) serves as a coordination point for L-serine. 270–272 (RLE) contacts ATP. Glu293 is a binding site for L-serine. Position 357–360 (357–360 (EISS)) interacts with ATP. Position 393 (Ser393) interacts with L-serine.

This sequence belongs to the class-II aminoacyl-tRNA synthetase family. Type-1 seryl-tRNA synthetase subfamily. In terms of assembly, homodimer. The tRNA molecule binds across the dimer.

The protein resides in the cytoplasm. It catalyses the reaction tRNA(Ser) + L-serine + ATP = L-seryl-tRNA(Ser) + AMP + diphosphate + H(+). It carries out the reaction tRNA(Sec) + L-serine + ATP = L-seryl-tRNA(Sec) + AMP + diphosphate + H(+). It participates in aminoacyl-tRNA biosynthesis; selenocysteinyl-tRNA(Sec) biosynthesis; L-seryl-tRNA(Sec) from L-serine and tRNA(Sec): step 1/1. Catalyzes the attachment of serine to tRNA(Ser). Is also able to aminoacylate tRNA(Sec) with serine, to form the misacylated tRNA L-seryl-tRNA(Sec), which will be further converted into selenocysteinyl-tRNA(Sec). The protein is Serine--tRNA ligase of Blochmanniella floridana.